A 311-amino-acid chain; its full sequence is Probable manganese-dependent inorganic pyrophosphatase (311 aa).

His-9, Asp-13, Asp-15, Asp-77, His-99, and Asp-151 together coordinate Mn(2+).

Belongs to the PPase class C family. It depends on Mn(2+) as a cofactor.

The protein resides in the cytoplasm. It carries out the reaction diphosphate + H2O = 2 phosphate + H(+). In Streptococcus equi subsp. equi (strain 4047), this protein is Probable manganese-dependent inorganic pyrophosphatase.